The following is a 197-amino-acid chain: Holliday junction resolvase RecU (197 aa).

Residues threonine 82, aspartate 84, glutamate 97, and glutamine 116 each contribute to the Mg(2+) site.

It belongs to the RecU family. Requires Mg(2+) as cofactor.

The protein localises to the cytoplasm. The catalysed reaction is Endonucleolytic cleavage at a junction such as a reciprocal single-stranded crossover between two homologous DNA duplexes (Holliday junction).. Functionally, endonuclease that resolves Holliday junction intermediates in genetic recombination. Cleaves mobile four-strand junctions by introducing symmetrical nicks in paired strands. Promotes annealing of linear ssDNA with homologous dsDNA. Required for DNA repair, homologous recombination and chromosome segregation. The protein is Holliday junction resolvase RecU of Streptococcus mutans serotype c (strain ATCC 700610 / UA159).